The following is a 229-amino-acid chain: Flagellar L-ring protein (229 aa).

Residues 1–23 (MLSRLGARVLYCLAGLALLASGG) form the signal peptide. Residue C24 is the site of N-palmitoyl cysteine attachment. The S-diacylglycerol cysteine moiety is linked to residue C24.

It belongs to the FlgH family. In terms of assembly, the basal body constitutes a major portion of the flagellar organelle and consists of four rings (L,P,S, and M) mounted on a central rod.

The protein localises to the cell outer membrane. It localises to the bacterial flagellum basal body. In terms of biological role, assembles around the rod to form the L-ring and probably protects the motor/basal body from shearing forces during rotation. This chain is Flagellar L-ring protein, found in Cupriavidus pinatubonensis (strain JMP 134 / LMG 1197) (Cupriavidus necator (strain JMP 134)).